The sequence spans 1227 residues: RNA-binding protein 20 (1227 aa).

2 disordered regions span residues 1-58 (MVLA…QAGL) and 289-374 (GSHV…SKQG). Low complexity predominate over residues 27-42 (PGARASPAPSGPRGMQ). A compositionally biased stretch (pro residues) spans 43 to 56 (QPPPPPQPPPPPQA). Over residues 313–331 (QGTNSQWESPHGFSGQSKP) the composition is skewed to polar residues. The U1-type zinc-finger motif lies at 409 to 443 (HLPHICSICDKKVFDLKDWELHVKGKLHAQKCLVF). The residue at position 498 (Ser-498) is a Phosphoserine. The RRM domain maps to 518 to 593 (RVVHICNLPE…EKLLIRMSKR (76 aa)). Over residues 624–634 (EADRYGPERPR) the composition is skewed to basic and acidic residues. Disordered regions lie at residues 624–906 (EADR…TNME) and 977–1089 (SLKS…ASPP). Positions 628-655 (YGPERPRSRSPVSRSLSPRSHTPSFTSC) are RS. Phosphoserine is present on residues Ser-635, Ser-637, Ser-640, Ser-642, Ser-660, and Ser-679. Residues 636 to 660 (RSPVSRSLSPRSHTPSFTSCSSSHS) show a composition bias toward low complexity. Composition is skewed to basic and acidic residues over residues 674 to 709 (DSWE…PWAH) and 716 to 738 (RQLD…EKYP). Positions 741 to 752 (GSPNLPHSVSSY) are enriched in polar residues. Ser-742 is modified (phosphoserine). 3 stretches are compositionally biased toward basic and acidic residues: residues 753–772 (KSRE…DKYL), 784–807 (RKDE…EDGL), and 816–856 (EGAK…KEEQ). Residue Ser-801 is modified to Phosphoserine. A phosphoserine mark is found at Ser-865, Ser-876, Ser-891, Ser-893, Ser-977, Ser-980, and Ser-1013. Basic and acidic residues predominate over residues 868–888 (RQEKEAEFSDPENTRTKKEQD). Positions 1024–1036 (CYEKEAKGVESSD) are enriched in basic and acidic residues. A phosphoserine mark is found at Ser-1048, Ser-1060, Ser-1080, Ser-1115, and Ser-1120. Residues 1161–1192 (FYCKLCGLFYTSEETAKMSHCRSAVHYRNLQK) form a Matrin-type zinc finger. The span at 1201–1215 (GLKETEGADSPRPED) shows a compositional bias: basic and acidic residues. The interval 1201 to 1227 (GLKETEGADSPRPEDSGIVPRFERKKL) is disordered. Ser-1210 carries the phosphoserine modification.

In terms of assembly, associates with components of the U1 and U2 U1 small nuclear ribonucleoprotein complexes. Post-translationally, phosphorylation regulates the subcellular localization. Phosphorylation of Ser-635 and Ser-637 in the RS (arginine/serine-rich) region promotes nuclear localization of the protein. In contrast, phosphorylation of the C-terminal disordered region promotes localization to cytoplasmic ribonucleoprotein granules. Mainly expressed in the heart. Also expressed in skeletal muscle tissues, ovary, small intestine and colon.

It is found in the nucleus. It localises to the cytoplasm. The protein localises to the cytoplasmic ribonucleoprotein granule. RNA-binding protein that acts as a regulator of mRNA splicing of a subset of genes encoding key structural proteins involved in cardiac development, such as TTN (Titin), CACNA1C, CAMK2D or PDLIM5/ENH. Acts as a repressor of mRNA splicing: specifically binds the 5'UCUU-3' motif that is predominantly found within intronic sequences of pre-mRNAs, leading to the exclusion of specific exons in target transcripts. RBM20-mediated exon skipping is hormone-dependent and is essential for TTN isoform transition in both cardiac and skeletal muscles. RBM20-mediated exon skipping of TTN provides substrates for the formation of circular RNA (circRNAs) from the TTN transcripts. Together with RBM24, promotes the expression of short isoforms of PDLIM5/ENH in cardiomyocytes. This chain is RNA-binding protein 20, found in Homo sapiens (Human).